We begin with the raw amino-acid sequence, 3068 residues long: Genome polyprotein (3068 aa).

The region spanning 144–287 (TFRDGHMNKF…MATVTHMEQY (144 aa)) is the Peptidase S30 domain. Catalysis depends on for P1 proteinase activity residues His195, Asp204, and Ser238. Positions 337 to 340 (KLTC) match the Involved in interaction with stylet and aphid transmission motif. The Involved in virions binding and aphid transmission signature appears at 595 to 597 (PTK). Residues 621-743 (LYIALDGYCY…ESEIKHYRVG (123 aa)) enclose the Peptidase C6 domain. Active-site for helper component proteinase activity residues include Cys629 and His702. One can recognise a Helicase ATP-binding domain in the interval 1228–1380 (DISISSERDF…TQFPVKLVVE (153 aa)). 1241–1248 (GAVGSGKS) is an ATP binding site. Positions 1330–1333 (DECH) match the DECH box motif. The Helicase C-terminal domain maps to 1399–1558 (DMIQYGNNLL…NLPVMSSGVS (160 aa)). A Nuclear localization signal motif is present at residues 1884 to 1891 (KKGKGKGT). O-(5'-phospho-RNA)-tyrosine is present on Tyr1906. Residues 2031–2249 (AKTLMRGLRD…VLWGPLQLTK (219 aa)) form the Peptidase C4 domain. Catalysis depends on for nuclear inclusion protein A activity residues His2076, Asp2111, and Cys2181. The RdRp catalytic domain occupies 2518 to 2642 (WIYCDADGSQ…AVNPERESLL (125 aa)). The interval 2796-2833 (SSSRSDTLDAGEEKKKNKEVATVSDGMGKKEVESTRDS) is disordered. Basic and acidic residues predominate over residues 2822 to 2833 (MGKKEVESTRDS). Position 3051 is a phosphothreonine (Thr3051).

The protein belongs to the potyviridae genome polyprotein family. Interacts with host eIF4E protein (via cap-binding region); this interaction mediates the translation of the VPg-viral RNA conjugates. Part of a complex that comprises VPg, RNA, host EIF4E and EIF4G; this interaction mediates the translation of the VPg-viral RNA conjugates. VPg is uridylylated by the polymerase and is covalently attached to the 5'-end of the genomic RNA. This uridylylated form acts as a nucleotide-peptide primer for the polymerase. In terms of processing, potyviral RNA is expressed as two polyproteins which undergo post-translational proteolytic processing. Genome polyprotein is processed by NIa-pro, P1 and HC-pro proteinases resulting in the production of at least ten individual proteins. P3N-PIPO polyprotein is cleaved by P1 and HC-pro proteinases resulting in the production of three individual proteins. The P1 proteinase and the HC-pro cleave only their respective C-termini autocatalytically. 6K1 is essential for proper proteolytic separation of P3 from CI.

Its subcellular location is the host cytoplasmic vesicle. It localises to the host nucleus. The protein resides in the virion. The enzyme catalyses RNA(n) + a ribonucleoside 5'-triphosphate = RNA(n+1) + diphosphate. It catalyses the reaction Hydrolyzes glutaminyl bonds, and activity is further restricted by preferences for the amino acids in P6 - P1' that vary with the species of potyvirus, e.g. Glu-Xaa-Xaa-Tyr-Xaa-Gln-|-(Ser or Gly) for the enzyme from tobacco etch virus. The natural substrate is the viral polyprotein, but other proteins and oligopeptides containing the appropriate consensus sequence are also cleaved.. The catalysed reaction is Hydrolyzes a Gly-|-Gly bond at its own C-terminus, commonly in the sequence -Tyr-Xaa-Val-Gly-|-Gly, in the processing of the potyviral polyprotein.. Its function is as follows. Required for aphid transmission and also has proteolytic activity. Only cleaves a Gly-Gly dipeptide at its own C-terminus. Interacts with virions and aphid stylets. Acts as a suppressor of RNA-mediated gene silencing, also known as post-transcriptional gene silencing (PTGS), a mechanism of plant viral defense that limits the accumulation of viral RNAs. May have RNA-binding activity. Functionally, has helicase activity. It may be involved in replication. In terms of biological role, indispensable for virus replication. Reduces the abundance of host transcripts related to jasmonic acid biosynthesis therefore altering the host defenses. In order to increase its own stability, decreases host protein degradation pathways. Indispensable for virus replication. Its function is as follows. Mediates the cap-independent, EIF4E-dependent translation of viral genomic RNAs. Binds to the cap-binding site of host EIF4E and thus interferes with the host EIF4E-dependent mRNA export and translation. VPg-RNA directly binds EIF4E and is a template for transcription. Also forms trimeric complexes with EIF4E-EIF4G, which are templates for translation. Functionally, has RNA-binding and proteolytic activities. In terms of biological role, an RNA-dependent RNA polymerase that plays an essential role in the virus replication. Involved in aphid transmission, cell-to-cell and systemis movement, encapsidation of the viral RNA and in the regulation of viral RNA amplification. The protein is Genome polyprotein of Pepper mottle virus (isolate California) (PeMV).